Consider the following 298-residue polypeptide: Small ribosomal subunit protein uS2 (298 aa).

A disordered region spans residues 272–298; that stretch reads EGGDWAASSAAPAGESWAEAQPTEAKW.

This sequence belongs to the universal ribosomal protein uS2 family. Component of the small ribosomal subunit. Mature ribosomes consist of a small (40S) and a large (60S) subunit. The 40S subunit contains about 33 different proteins and 1 molecule of RNA (18S). The 60S subunit contains about 49 different proteins and 3 molecules of RNA (25S, 5.8S and 5S). Interacts with rps21.

It localises to the cytoplasm. In terms of biological role, required for the assembly and/or stability of the 40S ribosomal subunit. Required for the processing of the 20S rRNA-precursor to mature 18S rRNA in a late step of the maturation of 40S ribosomal subunits. This is Small ribosomal subunit protein uS2 (rps0) from Aspergillus niger (strain ATCC MYA-4892 / CBS 513.88 / FGSC A1513).